A 204-amino-acid chain; its full sequence is ATP phosphoribosyltransferase (204 aa).

Belongs to the ATP phosphoribosyltransferase family. Short subfamily. In terms of assembly, heteromultimer composed of HisG and HisZ subunits.

It localises to the cytoplasm. It catalyses the reaction 1-(5-phospho-beta-D-ribosyl)-ATP + diphosphate = 5-phospho-alpha-D-ribose 1-diphosphate + ATP. The protein operates within amino-acid biosynthesis; L-histidine biosynthesis; L-histidine from 5-phospho-alpha-D-ribose 1-diphosphate: step 1/9. Catalyzes the condensation of ATP and 5-phosphoribose 1-diphosphate to form N'-(5'-phosphoribosyl)-ATP (PR-ATP). Has a crucial role in the pathway because the rate of histidine biosynthesis seems to be controlled primarily by regulation of HisG enzymatic activity. The protein is ATP phosphoribosyltransferase of Staphylococcus aureus (strain MRSA252).